We begin with the raw amino-acid sequence, 454 residues long: Kynurenine--oxoglutarate transaminase 3 (454 aa).

Position 71 (Gly-71) interacts with substrate. Residue Lys-116 is modified to N6-acetyllysine; alternate. The residue at position 116 (Lys-116) is an N6-succinyllysine; alternate. Asn-218 contacts substrate. Lys-280 carries the post-translational modification N6-(pyridoxal phosphate)lysine. Arg-429 is a binding site for substrate.

It belongs to the class-I pyridoxal-phosphate-dependent aminotransferase family. Homodimer. It depends on pyridoxal 5'-phosphate as a cofactor.

The catalysed reaction is L-kynurenine + 2-oxoglutarate = kynurenate + L-glutamate + H2O. It catalyses the reaction L-kynurenine + glyoxylate = kynurenate + glycine + H2O. The enzyme catalyses 3-hydroxy-L-kynurenine + glyoxylate = xanthurenate + glycine + H2O. It carries out the reaction an S-substituted L-cysteine + H2O = a thiol + pyruvate + NH4(+). Its pathway is amino-acid degradation; L-kynurenine degradation; kynurenate from L-kynurenine: step 1/2. Catalyzes the irreversible transamination of the L-tryptophan metabolite L-kynurenine to form kynurenic acid (KA), an intermediate in the tryptophan catabolic pathway which is also a broad spectrum antagonist of the three ionotropic excitatory amino acid receptors among others. May catalyze the beta-elimination of S-conjugates and Se-conjugates of L-(seleno)cysteine, resulting in the cleavage of the C-S or C-Se bond. Has transaminase activity towards L-kynurenine, tryptophan, phenylalanine, serine, cysteine, methionine, histidine, glutamine and asparagine with glyoxylate as an amino group acceptor (in vitro). Has lower activity with 2-oxoglutarate as amino group acceptor (in vitro). The sequence is that of Kynurenine--oxoglutarate transaminase 3 from Rattus norvegicus (Rat).